The following is a 320-amino-acid chain: Ferrochelatase (320 aa).

Residues histidine 194 and glutamate 275 each contribute to the Fe cation site.

Belongs to the ferrochelatase family. Monomer.

It is found in the cytoplasm. The catalysed reaction is heme b + 2 H(+) = protoporphyrin IX + Fe(2+). The protein operates within porphyrin-containing compound metabolism; protoheme biosynthesis; protoheme from protoporphyrin-IX: step 1/1. Its function is as follows. Catalyzes the ferrous insertion into protoporphyrin IX. The protein is Ferrochelatase of Shigella flexneri serotype 5b (strain 8401).